The following is a 453-amino-acid chain: 4,4'-diapolycopene-4,4'-dial dehydrogenase (453 aa).

Residues 1-20 (MPDNDSHSLKSLPERQREDL) show a composition bias toward basic and acidic residues. The disordered stretch occupies residues 1–23 (MPDNDSHSLKSLPERQREDLFSA). Active-site residues include glutamate 215 and cysteine 249.

It belongs to the aldehyde dehydrogenase family.

It catalyses the reaction all-trans-4,4'-diapolycopene-4,4'-dial + 2 A + 2 H2O = all-trans-4,4'-diapolycopene-4,4'-dioate + 2 AH2 + 2 H(+). The protein operates within carotenoid biosynthesis. Functionally, involved in the biosynthesis of the major C30 carotenoid 4,4'-diapolycopene-4,4'-dioic acid, which protects B.firmus from peroxidative reactions. Catalyzes the oxidation of 4,4'-diapolycopene-4,4'-dial to yield 4,4'-diapolycopene-4,4'-dioic aci. This Cytobacillus firmus (Bacillus firmus) protein is 4,4'-diapolycopene-4,4'-dial dehydrogenase.